The following is a 290-amino-acid chain: Short chain dehydrogenase/reductase nsrO (290 aa).

Residues I37 and K149 each coordinate NADP(+). Active-site proton donor residues include S168 and Y182. Residues Y182, K186, and T221 each coordinate NADP(+). K186 serves as the catalytic Lowers pKa of active site Tyr.

The protein belongs to the short-chain dehydrogenases/reductases (SDR) family.

Its pathway is secondary metabolite biosynthesis. Short chain dehydrogenase/reductase; part of the gene cluster that mediates the biosynthesis of the tetrahydroxanthone dimer neosartorin, which exhibits antibacterial activity. The two different monomeric units appear to be synthesized by the same set of enzymes, among which the Baeyer-Villiger monooxygenase nsrF is the key enzyme for the divergence of the biosynthetic routes. The pathway begins with the synthesis of atrochrysone thioester by the polyketide synthase nsrB. The atrochrysone carboxyl ACP thioesterase nsrC then breaks the thioester bond and releases the atrochrysone carboxylic acid from AacuL. Atrochrysone carboxylic acid is decarboxylated by the decarboxylase nsrE, and oxidized by the anthrone oxygenase nsrD to yield emodin. Emodin is then reduced to emodin hydroquinone by the oxidoreductase nsrR. A-ring reduction by the short chain dehydrogenase nsrJ, dehydration by the scytalone dehydratase-like protein nsrI and probable spontaneous re-oxidation, results in overall deoxygenation to chrysophanol. The Baeyer-Villiger monooxygenase nsrF accepts chrysophanol as a substrate to insert one oxygen atom at two different positions to yield the precursors of both monomric units. NsrF is promiscuous/flexible in interacting with the 2 (non methylated and methylated) aromatic rings of chrysophanol, thus diverging the biosynthetic pathway at this point. After the hydrolysis of the lactones, methylesterification by the methyltransferase nsrG yields respectively moniliphenone and 2,2',6'-trihydroxy-4-methyl-6-methoxya-cyldiphenylmethanone. The next steps are the hydroxylation by the FAD-dependent monooxygenase nsrK, followed by isomerization by the monooxygenase nsrQ. The short chain dehydrogenase/reductase nsrO then catalyzes the C-5 ketoreduction to give the xanthone skeleton of blennolide C and 5-acetylblennolide A. The acetyltransferase nsrL has a strict substrate specificity and uses only blennolide A but not blennolide C to yield 5-acetylblennolide A as the single-acetylated product. In the final step of the biosynthesis, the heterodimerization of the 2 xanthones, blennolide C and 5-acetylblennolide A, is catalyzed by the cytochrome P450 monooxygenase nsrP. NsrP can utilize at least three different xanthones as its substrates to perform the dimerization reaction. The sequence is that of Short chain dehydrogenase/reductase nsrO from Aspergillus novofumigatus (strain IBT 16806).